The primary structure comprises 346 residues: Holliday junction branch migration complex subunit RuvB (346 aa).

A large ATPase domain (RuvB-L) region spans residues 1–182; that stretch reads MSEAARLIAP…FGIPVRLNFY (182 aa). ATP-binding positions include L21, R22, G63, K66, T67, T68, 129-131, R172, Y182, and R219; that span reads EDF. T67 is a binding site for Mg(2+). The tract at residues 183–253 is small ATPAse domain (RuvB-S); the sequence is TVEELELIVR…IADEALTRLL (71 aa). A head domain (RuvB-H) region spans residues 256-346; it reads SMGLDQLDRR…SQFRLTLEDD (91 aa). DNA-binding residues include R292, R311, and R316.

The protein belongs to the RuvB family. In terms of assembly, homohexamer. Forms an RuvA(8)-RuvB(12)-Holliday junction (HJ) complex. HJ DNA is sandwiched between 2 RuvA tetramers; dsDNA enters through RuvA and exits via RuvB. An RuvB hexamer assembles on each DNA strand where it exits the tetramer. Each RuvB hexamer is contacted by two RuvA subunits (via domain III) on 2 adjacent RuvB subunits; this complex drives branch migration. In the full resolvosome a probable DNA-RuvA(4)-RuvB(12)-RuvC(2) complex forms which resolves the HJ.

Its subcellular location is the cytoplasm. It carries out the reaction ATP + H2O = ADP + phosphate + H(+). In terms of biological role, the RuvA-RuvB-RuvC complex processes Holliday junction (HJ) DNA during genetic recombination and DNA repair, while the RuvA-RuvB complex plays an important role in the rescue of blocked DNA replication forks via replication fork reversal (RFR). RuvA specifically binds to HJ cruciform DNA, conferring on it an open structure. The RuvB hexamer acts as an ATP-dependent pump, pulling dsDNA into and through the RuvAB complex. RuvB forms 2 homohexamers on either side of HJ DNA bound by 1 or 2 RuvA tetramers; 4 subunits per hexamer contact DNA at a time. Coordinated motions by a converter formed by DNA-disengaged RuvB subunits stimulates ATP hydrolysis and nucleotide exchange. Immobilization of the converter enables RuvB to convert the ATP-contained energy into a lever motion, pulling 2 nucleotides of DNA out of the RuvA tetramer per ATP hydrolyzed, thus driving DNA branch migration. The RuvB motors rotate together with the DNA substrate, which together with the progressing nucleotide cycle form the mechanistic basis for DNA recombination by continuous HJ branch migration. Branch migration allows RuvC to scan DNA until it finds its consensus sequence, where it cleaves and resolves cruciform DNA. The protein is Holliday junction branch migration complex subunit RuvB of Sinorhizobium medicae (strain WSM419) (Ensifer medicae).